The sequence spans 228 residues: NAD(P)H-hydrate epimerase (228 aa).

The YjeF N-terminal domain occupies 9-215 (AISIDEELFN…RLEEKYSLEL (207 aa)). 58 to 62 (NNGGD) serves as a coordination point for (6S)-NADPHX. Positions 59 and 123 each coordinate K(+). Residues 127 to 133 (GFSFKPP) and aspartate 156 contribute to the (6S)-NADPHX site. Serine 159 is a binding site for K(+).

Belongs to the NnrE/AIBP family. The cofactor is K(+).

The enzyme catalyses (6R)-NADHX = (6S)-NADHX. It carries out the reaction (6R)-NADPHX = (6S)-NADPHX. Functionally, catalyzes the epimerization of the S- and R-forms of NAD(P)HX, a damaged form of NAD(P)H that is a result of enzymatic or heat-dependent hydration. This is a prerequisite for the S-specific NAD(P)H-hydrate dehydratase to allow the repair of both epimers of NAD(P)HX. The chain is NAD(P)H-hydrate epimerase from Anopheles darlingi (Mosquito).